The sequence spans 111 residues: Ribosome-binding factor A (111 aa).

The protein belongs to the RbfA family. In terms of assembly, monomer. Binds 30S ribosomal subunits, but not 50S ribosomal subunits or 70S ribosomes.

It is found in the cytoplasm. In terms of biological role, one of several proteins that assist in the late maturation steps of the functional core of the 30S ribosomal subunit. Associates with free 30S ribosomal subunits (but not with 30S subunits that are part of 70S ribosomes or polysomes). Required for efficient processing of 16S rRNA. May interact with the 5'-terminal helix region of 16S rRNA. The polypeptide is Ribosome-binding factor A (Helicobacter pylori (strain HPAG1)).